A 634-amino-acid chain; its full sequence is Threonine--tRNA ligase (634 aa).

The TGS domain occupies 1 to 61 (MINIRFPDGS…NSNCELRLIT (61 aa)). The interval 241-532 (DHRKIGKVLD…LIEHYAGNLP (292 aa)) is catalytic. Residues Cys332, His383, and His509 each contribute to the Zn(2+) site.

This sequence belongs to the class-II aminoacyl-tRNA synthetase family. In terms of assembly, homodimer. Zn(2+) serves as cofactor.

The protein resides in the cytoplasm. The catalysed reaction is tRNA(Thr) + L-threonine + ATP = L-threonyl-tRNA(Thr) + AMP + diphosphate + H(+). In terms of biological role, catalyzes the attachment of threonine to tRNA(Thr) in a two-step reaction: L-threonine is first activated by ATP to form Thr-AMP and then transferred to the acceptor end of tRNA(Thr). Also edits incorrectly charged L-seryl-tRNA(Thr). This Francisella tularensis subsp. novicida (strain U112) protein is Threonine--tRNA ligase.